We begin with the raw amino-acid sequence, 431 residues long: Adenylosuccinate lyase (431 aa).

Residues 4-5 (RY), 67-69 (RHD), and 93-94 (TS) each bind N(6)-(1,2-dicarboxyethyl)-AMP. The active-site Proton donor/acceptor is the His141. Gln212 serves as a coordination point for N(6)-(1,2-dicarboxyethyl)-AMP. The active-site Proton donor/acceptor is the Ser262. N(6)-(1,2-dicarboxyethyl)-AMP contacts are provided by residues Ser263, 268-270 (KRN), Asn276, and 307-311 (SAERI).

Belongs to the lyase 1 family. Adenylosuccinate lyase subfamily. As to quaternary structure, homodimer and homotetramer. Residues from neighboring subunits contribute catalytic and substrate-binding residues to each active site.

It carries out the reaction N(6)-(1,2-dicarboxyethyl)-AMP = fumarate + AMP. It catalyses the reaction (2S)-2-[5-amino-1-(5-phospho-beta-D-ribosyl)imidazole-4-carboxamido]succinate = 5-amino-1-(5-phospho-beta-D-ribosyl)imidazole-4-carboxamide + fumarate. Its pathway is purine metabolism; AMP biosynthesis via de novo pathway; AMP from IMP: step 2/2. It functions in the pathway purine metabolism; IMP biosynthesis via de novo pathway; 5-amino-1-(5-phospho-D-ribosyl)imidazole-4-carboxamide from 5-amino-1-(5-phospho-D-ribosyl)imidazole-4-carboxylate: step 2/2. Functionally, catalyzes two reactions in de novo purine nucleotide biosynthesis. Catalyzes the breakdown of 5-aminoimidazole- (N-succinylocarboxamide) ribotide (SAICAR or 2-[5-amino-1-(5-phospho-beta-D-ribosyl)imidazole-4-carboxamido]succinate) to 5-aminoimidazole-4-carboxamide ribotide (AICAR or 5-amino-1-(5-phospho-beta-D-ribosyl)imidazole-4-carboxamide) and fumarate, and of adenylosuccinate (ADS or N(6)-(1,2-dicarboxyethyl)-AMP) to adenosine monophosphate (AMP) and fumarate. The polypeptide is Adenylosuccinate lyase (purB) (Staphylococcus aureus (strain USA300)).